Consider the following 26-residue polypeptide: uncharacterized protein (26 aa).

Over residues 1-16 (MPEQKANCSPNGNITV) the composition is skewed to polar residues. A disordered region spans residues 1-26 (MPEQKANCSPNGNITVDSMIMSLGSS).

This is an uncharacterized protein from Saccharomyces cerevisiae (strain ATCC 204508 / S288c) (Baker's yeast).